Consider the following 547-residue polypeptide: Glucose-6-phosphate isomerase 2 (547 aa).

E351 acts as the Proton donor in catalysis. Catalysis depends on residues H382 and K508.

It belongs to the GPI family.

The protein localises to the cytoplasm. The enzyme catalyses alpha-D-glucose 6-phosphate = beta-D-fructose 6-phosphate. Its pathway is carbohydrate biosynthesis; gluconeogenesis. The protein operates within carbohydrate degradation; glycolysis; D-glyceraldehyde 3-phosphate and glycerone phosphate from D-glucose: step 2/4. Catalyzes the reversible isomerization of glucose-6-phosphate to fructose-6-phosphate. This Neisseria meningitidis serogroup B (strain ATCC BAA-335 / MC58) protein is Glucose-6-phosphate isomerase 2.